The chain runs to 209 residues: Outer-membrane lipoprotein carrier protein (209 aa).

The first 21 residues, 1-21, serve as a signal peptide directing secretion; that stretch reads MHRQLRYAVLATALFASTAFA.

It belongs to the LolA family. Monomer.

Its subcellular location is the periplasm. Functionally, participates in the translocation of lipoproteins from the inner membrane to the outer membrane. Only forms a complex with a lipoprotein if the residue after the N-terminal Cys is not an aspartate (The Asp acts as a targeting signal to indicate that the lipoprotein should stay in the inner membrane). The chain is Outer-membrane lipoprotein carrier protein from Xanthomonas axonopodis pv. citri (strain 306).